Reading from the N-terminus, the 350-residue chain is Ornithine carbamoyltransferase, mitochondrial (350 aa).

Residues 1–30 constitute a mitochondrion transit peptide; it reads MLHHMRTIINASWRYGNKCIVRQFGFSQTY. Residues 86–90, Arg-137, and His-164 each bind carbamoyl phosphate; that span reads STRTR. Arg-137 contacts L-ornithine. L-ornithine-binding positions include Asn-195, 259-263, 298-301, and Arg-326; these read DTWVS and HCLP. Cys-299 is a catalytic residue. Arg-326 serves as a coordination point for carbamoyl phosphate.

The protein belongs to the aspartate/ornithine carbamoyltransferase superfamily. OTCase family. As to quaternary structure, homotrimer. As to expression, liver.

It is found in the mitochondrion matrix. It carries out the reaction carbamoyl phosphate + L-ornithine = L-citrulline + phosphate + H(+). It functions in the pathway nitrogen metabolism; urea cycle; L-citrulline from L-ornithine and carbamoyl phosphate: step 1/1. OTC is necessary for the tadpoles transition from an ammonotelic, aquatic larva to a ureotelic, terrestrial adult. The chain is Ornithine carbamoyltransferase, mitochondrial from Aquarana catesbeiana (American bullfrog).